The following is a 118-amino-acid chain: Large ribosomal subunit protein bL17 (118 aa).

The protein belongs to the bacterial ribosomal protein bL17 family. Part of the 50S ribosomal subunit. Contacts protein L32.

In Hydrogenobaculum sp. (strain Y04AAS1), this protein is Large ribosomal subunit protein bL17.